Consider the following 368-residue polypeptide: uncharacterized protein (368 aa).

Might be involved in sporulation. This is an uncharacterized protein from Brachyspira hyodysenteriae (strain ATCC 49526 / WA1).